The following is a 269-amino-acid chain: Phosphate import ATP-binding protein PstB 2 (269 aa).

Residues 23–264 (LHTEDLHVFY…PKIQATEDYV (242 aa)) form the ABC transporter domain. ATP is bound at residue 55 to 62 (GPSGCGKS).

The protein belongs to the ABC transporter superfamily. Phosphate importer (TC 3.A.1.7) family. The complex is composed of two ATP-binding proteins (PstB), two transmembrane proteins (PstC and PstA) and a solute-binding protein (PstS).

The protein resides in the cell membrane. The enzyme catalyses phosphate(out) + ATP + H2O = ADP + 2 phosphate(in) + H(+). Functionally, part of the ABC transporter complex PstSACB involved in phosphate import. Responsible for energy coupling to the transport system. The protein is Phosphate import ATP-binding protein PstB 2 of Enterococcus faecalis (strain ATCC 700802 / V583).